We begin with the raw amino-acid sequence, 99 residues long: Defensin-like protein 2 (99 aa).

The first 30 residues, 1–30, serve as a signal peptide directing secretion; it reads MAMAKKSVSSFTLIFILVLVIFEVPEIKAQ. Disulfide bonds link C34–C86, C47–C71, C56–C81, and C60–C83. Positions 94 to 99 are excised as a propeptide; that stretch reads ILRGGI.

It belongs to the DEFL family. Protease inhibitor I18 (RTI/MTI-2) subfamily.

The protein resides in the secreted. Functionally, inhibits bovine beta-trypsin and alpha-chymotrypsin on a 1:1 molar basis. The polypeptide is Defensin-like protein 2 (Sinapis alba (White mustard)).